A 139-amino-acid polypeptide reads, in one-letter code: Holo-[acyl-carrier-protein] synthase (139 aa).

Mg(2+) contacts are provided by Asp-8 and Glu-61.

It belongs to the P-Pant transferase superfamily. AcpS family. It depends on Mg(2+) as a cofactor.

It localises to the cytoplasm. The catalysed reaction is apo-[ACP] + CoA = holo-[ACP] + adenosine 3',5'-bisphosphate + H(+). Transfers the 4'-phosphopantetheine moiety from coenzyme A to a Ser of acyl-carrier-protein. This Nitrobacter winogradskyi (strain ATCC 25391 / DSM 10237 / CIP 104748 / NCIMB 11846 / Nb-255) protein is Holo-[acyl-carrier-protein] synthase.